The chain runs to 172 residues: Adenine phosphoribosyltransferase (172 aa).

Belongs to the purine/pyrimidine phosphoribosyltransferase family. In terms of assembly, homodimer.

The protein localises to the cytoplasm. The enzyme catalyses AMP + diphosphate = 5-phospho-alpha-D-ribose 1-diphosphate + adenine. Its pathway is purine metabolism; AMP biosynthesis via salvage pathway; AMP from adenine: step 1/1. Catalyzes a salvage reaction resulting in the formation of AMP, that is energically less costly than de novo synthesis. In Staphylococcus aureus (strain Mu3 / ATCC 700698), this protein is Adenine phosphoribosyltransferase.